Reading from the N-terminus, the 382-residue chain is Anhydro-N-acetylmuramic acid kinase (382 aa).

22 to 29 (GTSMDGVD) serves as a coordination point for ATP.

The protein belongs to the anhydro-N-acetylmuramic acid kinase family.

The catalysed reaction is 1,6-anhydro-N-acetyl-beta-muramate + ATP + H2O = N-acetyl-D-muramate 6-phosphate + ADP + H(+). The protein operates within amino-sugar metabolism; 1,6-anhydro-N-acetylmuramate degradation. It participates in cell wall biogenesis; peptidoglycan recycling. Catalyzes the specific phosphorylation of 1,6-anhydro-N-acetylmuramic acid (anhMurNAc) with the simultaneous cleavage of the 1,6-anhydro ring, generating MurNAc-6-P. Is required for the utilization of anhMurNAc either imported from the medium or derived from its own cell wall murein, and thus plays a role in cell wall recycling. In Burkholderia vietnamiensis (strain G4 / LMG 22486) (Burkholderia cepacia (strain R1808)), this protein is Anhydro-N-acetylmuramic acid kinase.